The primary structure comprises 580 residues: Protein O-linked-mannose beta-1,4-N-acetylglucosaminyltransferase 2 (580 aa).

At 1-4 (MHLS) the chain is on the cytoplasmic side. The helical; Signal-anchor for type II membrane protein transmembrane segment at 5–25 (AVLNALLVSVLAAVLWKHVRL) threads the bilayer. Residues 26–580 (REHAAALEEE…PFADVLVCNT (555 aa)) lie on the Lumenal side of the membrane. Residues asparagine 99 and asparagine 276 are each glycosylated (N-linked (GlcNAc...) asparagine). Residues 488–580 (ARCQASVQGA…PFADVLVCNT (93 aa)) enclose the Fibronectin type-III domain.

It belongs to the glycosyltransferase 61 family.

Its subcellular location is the endoplasmic reticulum membrane. It carries out the reaction 3-O-(alpha-D-mannosyl)-L-threonyl-[protein] + UDP-N-acetyl-alpha-D-glucosamine = 3-O-(N-acetyl-beta-D-glucosaminyl-(1-&gt;4)-alpha-D-mannosyl)-L-threonyl-[protein] + UDP + H(+). Its pathway is protein modification; protein glycosylation. Its function is as follows. O-linked mannose beta-1,4-N-acetylglucosaminyltransferase that transfers UDP-N-acetyl-D-glucosamine to the 4-position of the mannose to generate N-acetyl-D-glucosamine-beta-1,4-O-D-mannosylprotein. Involved in the biosynthesis of the phosphorylated O-mannosyl trisaccharide (N-acetylgalactosamine-beta-3-N-acetylglucosamine-beta-4-(phosphate-6-)mannose), a carbohydrate structure present in alpha-dystroglycan (DAG1), which is required for binding laminin G-like domain-containing extracellular proteins with high affinity. This chain is Protein O-linked-mannose beta-1,4-N-acetylglucosaminyltransferase 2 (POMGNT2), found in Canis lupus familiaris (Dog).